The primary structure comprises 254 residues: 5-oxoprolinase subunit A (254 aa).

The protein belongs to the LamB/PxpA family. Forms a complex composed of PxpA, PxpB and PxpC.

The enzyme catalyses 5-oxo-L-proline + ATP + 2 H2O = L-glutamate + ADP + phosphate + H(+). In terms of biological role, catalyzes the cleavage of 5-oxoproline to form L-glutamate coupled to the hydrolysis of ATP to ADP and inorganic phosphate. This chain is 5-oxoprolinase subunit A, found in Acinetobacter baumannii (strain ACICU).